Consider the following 200-residue polypeptide: MSEALTELASYLGEARGNLIAASQMKYGELTLTTTGENLVALLTFLRDDAKCGFVNLIDICGVDWPQRELRFDVVYHLLSPKKNLRIRVKVATDEDTPVPSACPVYPGADWFERETWDMYGVLFTGHPDLRRILTDYGFEGHPLRKDFPTTGFVEVRYDDAAKRVVYEPVELKQEFRNFDFMSPWEGTEYVLPGDEKAKQ.

Belongs to the complex I 30 kDa subunit family. As to quaternary structure, NDH-1 is composed of 14 different subunits. Subunits NuoB, C, D, E, F, and G constitute the peripheral sector of the complex.

The protein localises to the cell inner membrane. The enzyme catalyses a quinone + NADH + 5 H(+)(in) = a quinol + NAD(+) + 4 H(+)(out). In terms of biological role, NDH-1 shuttles electrons from NADH, via FMN and iron-sulfur (Fe-S) centers, to quinones in the respiratory chain. The immediate electron acceptor for the enzyme in this species is believed to be ubiquinone. Couples the redox reaction to proton translocation (for every two electrons transferred, four hydrogen ions are translocated across the cytoplasmic membrane), and thus conserves the redox energy in a proton gradient. In Rhizobium johnstonii (strain DSM 114642 / LMG 32736 / 3841) (Rhizobium leguminosarum bv. viciae), this protein is NADH-quinone oxidoreductase subunit C.